The primary structure comprises 129 residues: Follitropin subunit beta (129 aa).

The N-terminal stretch at 1-18 (MKSVQFCFLFCCWRAICC) is a signal peptide. 6 cysteine pairs are disulfide-bonded: Cys-21/Cys-69, Cys-35/Cys-84, Cys-38/Cys-122, Cys-46/Cys-100, Cys-50/Cys-102, and Cys-105/Cys-112. 2 N-linked (GlcNAc...) asparagine glycosylation sites follow: Asn-25 and Asn-42.

This sequence belongs to the glycoprotein hormones subunit beta family. As to quaternary structure, heterodimer. The active follitropin is a heterodimer composed of an alpha chain/CGA shared with other hormones and a unique beta chain/FSHB shown here.

It is found in the secreted. In terms of biological role, together with the alpha chain CGA constitutes follitropin, the follicle-stimulating hormone, and provides its biological specificity to the hormone heterodimer. Binds FSHR, a G protein-coupled receptor, on target cells to activate downstream signaling pathways. Follitropin is involved in follicle development and spermatogenesis in reproductive organs. This Capra hircus (Goat) protein is Follitropin subunit beta (FSHB).